The chain runs to 368 residues: 4-hydroxy-3-methylbut-2-en-1-yl diphosphate synthase (flavodoxin) (368 aa).

4 residues coordinate [4Fe-4S] cluster: Cys-268, Cys-271, Cys-303, and Glu-310.

It belongs to the IspG family. [4Fe-4S] cluster serves as cofactor.

The catalysed reaction is (2E)-4-hydroxy-3-methylbut-2-enyl diphosphate + oxidized [flavodoxin] + H2O + 2 H(+) = 2-C-methyl-D-erythritol 2,4-cyclic diphosphate + reduced [flavodoxin]. Its pathway is isoprenoid biosynthesis; isopentenyl diphosphate biosynthesis via DXP pathway; isopentenyl diphosphate from 1-deoxy-D-xylulose 5-phosphate: step 5/6. Its function is as follows. Converts 2C-methyl-D-erythritol 2,4-cyclodiphosphate (ME-2,4cPP) into 1-hydroxy-2-methyl-2-(E)-butenyl 4-diphosphate. This is 4-hydroxy-3-methylbut-2-en-1-yl diphosphate synthase (flavodoxin) from Listeria monocytogenes serotype 4b (strain F2365).